A 60-amino-acid chain; its full sequence is Large ribosomal subunit protein uL30 (60 aa).

It belongs to the universal ribosomal protein uL30 family. Part of the 50S ribosomal subunit.

In Paraburkholderia phytofirmans (strain DSM 17436 / LMG 22146 / PsJN) (Burkholderia phytofirmans), this protein is Large ribosomal subunit protein uL30.